A 436-amino-acid polypeptide reads, in one-letter code: GTPase Obg (436 aa).

The Obg domain maps to 1–159; it reads MAFVDQATIE…LKVKLELRVL (159 aa). The region spanning 160 to 335 is the OBG-type G domain; that stretch reads ADVGLVGFPS…LLLKVADLLD (176 aa). Residues 166–173, 191–195, 213–216, 285–288, and 316–318 contribute to the GTP site; these read GFPSAGKS, FTTID, DLPG, TKMD, and SSV. Residues serine 173 and threonine 193 each coordinate Mg(2+). Residues 357 to 436 form the OCT domain; the sequence is KDDHQSTDFQ…GADFAFEFEE (80 aa).

Belongs to the TRAFAC class OBG-HflX-like GTPase superfamily. OBG GTPase family. As to quaternary structure, monomer. The cofactor is Mg(2+).

It is found in the cytoplasm. Its function is as follows. An essential GTPase which binds GTP, GDP and possibly (p)ppGpp with moderate affinity, with high nucleotide exchange rates and a fairly low GTP hydrolysis rate. Plays a role in control of the cell cycle, stress response, ribosome biogenesis and in those bacteria that undergo differentiation, in morphogenesis control. The polypeptide is GTPase Obg (Oenococcus oeni (strain ATCC BAA-331 / PSU-1)).